A 201-amino-acid chain; its full sequence is 3-isopropylmalate dehydratase small subunit (201 aa).

It belongs to the LeuD family. LeuD type 1 subfamily. In terms of assembly, heterodimer of LeuC and LeuD.

The enzyme catalyses (2R,3S)-3-isopropylmalate = (2S)-2-isopropylmalate. Its pathway is amino-acid biosynthesis; L-leucine biosynthesis; L-leucine from 3-methyl-2-oxobutanoate: step 2/4. Its function is as follows. Catalyzes the isomerization between 2-isopropylmalate and 3-isopropylmalate, via the formation of 2-isopropylmaleate. This Ruegeria pomeroyi (strain ATCC 700808 / DSM 15171 / DSS-3) (Silicibacter pomeroyi) protein is 3-isopropylmalate dehydratase small subunit.